A 521-amino-acid polypeptide reads, in one-letter code: MSLLREAEKCLANQKTYASLNAFITPLQRAGPWRDRVRDSDTRRERGVTKSPLDGKLVAIKDNICTRDMPTTCASRILDTYTSPFNATVVESLEKSGAIIAGKTNLDEFGMGSHSMHSHFGPVKNVTESRREPISPGGSSGGSAVAVATGQCYAALGTDTGGSVRLPAAYTGTVGFKPSYGHVSRWGVVAYANSLDTVGVLGSSISTIREVYKTINHPDLHDPTNLPPATRTRLTAAVHNSSTTRSSPSPYLRIGIPTEYNIHELSPTVRTAWQRSIVHLQRMGHTILPVSLPATKHALAAYYVLAPAEASSNLARYDGVRYGTRDTDAPDDAEPGGYLYASSRGKGLGSEVKRRILLGAFSLSADAIDNYFLQAQRVRRLVQADFERVFRVKNPLLPAVDVDADVDGRDKKQIAGDNAGVDVLVVPTAPTLPPTVESLKRASTVETYMNDIFTVPASLAGLPALSVPVQMRGLSTVGDGDESKGDGADAAFGSVGIQAIGQFGDDEMVLHVGEMLEGMHG.

Residues Lys-61 and Ser-139 each act as charge relay system in the active site. The active-site Acyl-ester intermediate is Ser-163.

It belongs to the amidase family. GatA subfamily. In terms of assembly, subunit of the heterotrimeric GatCAB amidotransferase (AdT) complex, composed of A, B and C subunits.

The protein localises to the mitochondrion. The enzyme catalyses L-glutamyl-tRNA(Gln) + L-glutamine + ATP + H2O = L-glutaminyl-tRNA(Gln) + L-glutamate + ADP + phosphate + H(+). Functionally, allows the formation of correctly charged Gln-tRNA(Gln) through the transamidation of misacylated Glu-tRNA(Gln) in the mitochondria. The reaction takes place in the presence of glutamine and ATP through an activated gamma-phospho-Glu-tRNA(Gln). The sequence is that of Glutamyl-tRNA(Gln) amidotransferase subunit A, mitochondrial from Ajellomyces capsulatus (strain G186AR / H82 / ATCC MYA-2454 / RMSCC 2432) (Darling's disease fungus).